A 140-amino-acid chain; its full sequence is Protein NrdI (140 aa).

Belongs to the NrdI family.

In terms of biological role, probably involved in ribonucleotide reductase function. This Photorhabdus laumondii subsp. laumondii (strain DSM 15139 / CIP 105565 / TT01) (Photorhabdus luminescens subsp. laumondii) protein is Protein NrdI.